The chain runs to 499 residues: Lysine--tRNA ligase (499 aa).

Residues Glu-409 and Glu-416 each coordinate Mg(2+).

This sequence belongs to the class-II aminoacyl-tRNA synthetase family. As to quaternary structure, homodimer. Requires Mg(2+) as cofactor.

The protein resides in the cytoplasm. It carries out the reaction tRNA(Lys) + L-lysine + ATP = L-lysyl-tRNA(Lys) + AMP + diphosphate. The sequence is that of Lysine--tRNA ligase from Thioalkalivibrio sulfidiphilus (strain HL-EbGR7).